Reading from the N-terminus, the 63-residue chain is Large ribosomal subunit protein bL28 (63 aa).

The tract at residues 1–22 (MSRRCAITGKSAMNGHSVSHAN) is disordered.

It belongs to the bacterial ribosomal protein bL28 family.

The polypeptide is Large ribosomal subunit protein bL28 (Campylobacter hominis (strain ATCC BAA-381 / DSM 21671 / CCUG 45161 / LMG 19568 / NCTC 13146 / CH001A)).